A 211-amino-acid chain; its full sequence is Cytochrome c biogenesis ATP-binding export protein CcmA (211 aa).

The ABC transporter domain maps to leucine 17–tryptophan 209. ATP is bound at residue glycine 49 to serine 56.

The protein belongs to the ABC transporter superfamily. CcmA exporter (TC 3.A.1.107) family. The complex is composed of two ATP-binding proteins (CcmA) and two transmembrane proteins (CcmB).

The protein resides in the cell inner membrane. It carries out the reaction heme b(in) + ATP + H2O = heme b(out) + ADP + phosphate + H(+). Its function is as follows. Part of the ABC transporter complex CcmAB involved in the biogenesis of c-type cytochromes; once thought to export heme, this seems not to be the case, but its exact role is uncertain. Responsible for energy coupling to the transport system. The chain is Cytochrome c biogenesis ATP-binding export protein CcmA from Gluconobacter oxydans (strain 621H) (Gluconobacter suboxydans).